The following is a 128-amino-acid chain: Sulfurtransferase TusD (128 aa).

Cys78 serves as the catalytic Cysteine persulfide intermediate.

This sequence belongs to the DsrE/TusD family. As to quaternary structure, heterohexamer, formed by a dimer of trimers. The hexameric TusBCD complex contains 2 copies each of TusB, TusC and TusD. The TusBCD complex interacts with TusE.

The protein resides in the cytoplasm. Its function is as follows. Part of a sulfur-relay system required for 2-thiolation of 5-methylaminomethyl-2-thiouridine (mnm(5)s(2)U) at tRNA wobble positions. Accepts sulfur from TusA and transfers it in turn to TusE. This Buchnera aphidicola subsp. Acyrthosiphon pisum (strain 5A) protein is Sulfurtransferase TusD.